The following is an 88-amino-acid chain: Apolipoprotein C-I (88 aa).

The first 26 residues, 1–26 (MRLFLSLPVLVVVLAMVLEGPAPTQA), serve as a signal peptide directing secretion.

Belongs to the apolipoprotein C1 family.

The protein localises to the secreted. Functionally, inhibitor of lipoprotein binding to the low density lipoprotein (LDL) receptor, LDL receptor-related protein, and very low density lipoprotein (VLDL) receptor. Associates with high density lipoproteins (HDL) and the triacylglycerol-rich lipoproteins in the plasma and makes up about 10% of the protein of the VLDL and 2% of that of HDL. Appears to interfere directly with fatty acid uptake and is also the major plasma inhibitor of cholesteryl ester transfer protein (CETP). Binds free fatty acids and reduces their intracellular esterification. Modulates the interaction of APOE with beta-migrating VLDL and inhibits binding of beta-VLDL to the LDL receptor-related protein. The sequence is that of Apolipoprotein C-I (APOC1) from Mirounga angustirostris (Northern elephant seal).